The chain runs to 793 residues: E3 UFM1-protein ligase 1 (793 aa).

Alanine 2 carries the N-acetylalanine modification. Residues 2-200 form a mediates interaction with DDRGK1 region; that stretch reads ADAWEEIRRL…RGLFSAITRP (199 aa). Residues 2-212 are required for E3 UFM1-protein ligase activity; sequence ADAWEEIRRL…VNSLISKYGF (211 aa). Residues 121–250 are involved in CDK5RAP3-binding; the sequence is DRLAEEVNDK…KAVFVPDIYS (130 aa). Residues 200 to 400 are mediates interaction with TRIP4; the sequence is PTAVNSLISK…NPVHLITEED (201 aa). The segment at 407–473 is disordered; the sequence is LESVSTSKKD…SSHTGKKKPE (67 aa). The residue at position 433 (arginine 433) is an Omega-N-methylarginine. A Phosphoserine modification is found at serine 458. Positions 490 to 684 are mediates interaction with CDK5RAP3; it reads IQDAPEEFIS…QLKVTEDPAL (195 aa). A Phosphothreonine modification is found at threonine 536.

Belongs to the UFL1 family. As to quaternary structure, catalytic component of the UFM1 ribosome E3 ligase (UREL) complex, composed of UFL1, DDRGK1 and CDK5RAP3. Interacts with E2-like enzyme UFC1. Interacts with RELA. Interacts with NBN; promoting recruitment to double-strand breaks following DNA damage. Interacts (when phosphorylated) with YWHAG/14-3-3-gamma; sequestering UFL1 and preventing its association with PDCD1/PD-1 substrate. Post-translationally, ubiquitinated, leading to its degradation by the proteasome. Interaction with CDK5RAP3 protects both proteins against ubiquitination and degradation via the proteasome. Phosphorylation at Thr-536 by AMPK promotes its interaction with YWHAG/14-3-3-gamma, thereby preventing UFL1 association with PDCD1/PD-1 substrate.

It localises to the endoplasmic reticulum membrane. It is found in the cytoplasm. The protein localises to the cytosol. Its subcellular location is the nucleus. The protein resides in the chromosome. Functionally, E3 protein ligase that mediates ufmylation, the covalent attachment of the ubiquitin-like modifier UFM1 to lysine residues on target proteins, and which plays a key role in various processes, such as ribosome recycling, response to DNA damage, interferon response or reticulophagy (also called ER-phagy). Catalyzes ufmylation of many protein, such as CD274/PD-L1, CDK5RAP3, CYB5R3, DDRGK1, EIF6, histone H4, MRE11, P4HB, PDCD1/PD-1, TRIP4, RPN1, RPS20/uS10, RPL10/uL16, RPL26/uL24, SYVN1/HRD1 and TP53/p53. As part of the UREL complex, plays a key role in ribosome recycling by catalyzing mono-ufmylation of RPL26/uL24 subunit of the 60S ribosome. Ufmylation of RPL26/uL24 occurs on free 60S ribosomes following ribosome dissociation: it weakens the junction between post-termination 60S subunits and SEC61 translocons, promoting release and recycling of the large ribosomal subunit from the endoplasmic reticulum membrane. Ufmylation of RPL26/uL24 and subsequent 60S ribosome recycling either take place after normal termination of translation or after ribosome stalling during cotranslational translocation at the endoplasmic reticulum. Involved in reticulophagy in response to endoplasmic reticulum stress by mediating ufmylation of proteins such as CYB5R3 and RPN1, thereby promoting lysosomal degradation of ufmylated proteins. Ufmylation in response to endoplasmic reticulum stress is essential for processes such as hematopoiesis, blood vessel morphogenesis or inflammatory response. Mediates ufmylation of DDRGK1 and CDK5RAP3; the role of these modifications is however unclear: as both DDRGK1 and CDK5RAP3 act as substrate adapters for ufmylation, it is uncertain whether ufmylation of these proteins is, a collateral effect or is required for ufmylation. Acts as a negative regulator of T-cell activation by mediating ufmylation and stabilization of PDCD1/PD-1. Also involved in the response to DNA damage: recruited to double-strand break sites following DNA damage and mediates monoufmylation of histone H4 and ufmylation of MRE11. Mediates ufmylation of TP53/p53, promoting its stability. Catalyzes ufmylation of TRIP4, thereby playing a role in nuclear receptor-mediated transcription. Required for hematopoietic stem cell function and hematopoiesis. This chain is E3 UFM1-protein ligase 1, found in Macaca fascicularis (Crab-eating macaque).